The primary structure comprises 302 residues: ATP synthase gamma chain, sodium ion specific (302 aa).

It belongs to the ATPase gamma chain family. As to quaternary structure, F-type ATPases have 2 components, CF(1) - the catalytic core - and CF(0) - the membrane proton channel. CF(1) has five subunits: alpha(3), beta(3), gamma(1), delta(1), epsilon(1). CF(0) has three main subunits: a, b and c.

It localises to the cell membrane. Inhibited by nitrate. In terms of biological role, produces ATP from ADP in the presence of a proton gradient across the membrane. The gamma chain is believed to be important in regulating ATPase activity and the flow of protons through the CF(0) complex. This chain is ATP synthase gamma chain, sodium ion specific (atpG), found in Acetobacterium woodii (strain ATCC 29683 / DSM 1030 / JCM 2381 / KCTC 1655 / WB1).